We begin with the raw amino-acid sequence, 154 residues long: Gene 35 protein (154 aa).

The disordered stretch occupies residues 116-137 (LTAAQDDPVEGGPEPADVADTI).

It belongs to the herpesviridae UL96 family.

This is Gene 35 protein (35) from Equus caballus (Horse).